Here is a 462-residue protein sequence, read N- to C-terminus: BPI fold-containing family B member 2 (462 aa).

Positions 1 to 22 (MARACSLGLLLLLLLLLRTVVT) are cleaved as a signal peptide. Thr55 is modified (phosphothreonine). Ser63 is subject to Phosphoserine. An N-linked (GlcNAc...) asparagine glycan is attached at Asn99. A disulfide bridge links Cys140 with Cys177. Residues Asn297 and Asn336 are each glycosylated (N-linked (GlcNAc...) asparagine).

This sequence belongs to the BPI/LBP/Plunc superfamily. BPI/LBP family.

The protein resides in the secreted. The polypeptide is BPI fold-containing family B member 2 (Bpifb2) (Mus musculus (Mouse)).